The following is a 479-amino-acid chain: GMP reductase (479 aa).

2 CBS domains span residues 96–153 and 154–212; these read VLDT…VRDI and AVTD…ATDS. NADP(+)-binding positions include 246 to 248 and 296 to 298; these read DTA and GVG. Cys303 (thioimidate intermediate) is an active-site residue.

The protein belongs to the IMPDH/GMPR family. GuaB1 subfamily. It depends on a monovalent cation as a cofactor.

It catalyses the reaction IMP + NH4(+) + NADP(+) = GMP + NADPH + 2 H(+). The protein operates within purine metabolism; IMP biosynthesis via salvage pathway. Functionally, involved in the purine-salvage pathway. Catalyzes the NADPH-dependent conversion of GMP to IMP. The chain is GMP reductase from Mycobacterium bovis (strain ATCC BAA-935 / AF2122/97).